The primary structure comprises 214 residues: Nucleoside triphosphate pyrophosphatase (214 aa).

Residue Asp79 is the Proton acceptor of the active site.

It belongs to the Maf family. The cofactor is a divalent metal cation.

The protein resides in the cytoplasm. The catalysed reaction is a ribonucleoside 5'-triphosphate + H2O = a ribonucleoside 5'-phosphate + diphosphate + H(+). It catalyses the reaction a 2'-deoxyribonucleoside 5'-triphosphate + H2O = a 2'-deoxyribonucleoside 5'-phosphate + diphosphate + H(+). Nucleoside triphosphate pyrophosphatase. May have a dual role in cell division arrest and in preventing the incorporation of modified nucleotides into cellular nucleic acids. The protein is Nucleoside triphosphate pyrophosphatase of Rhodococcus opacus (strain B4).